The chain runs to 800 residues: MSVHTVMRTQVRSLAGMPKAAMRPLGNSFCARRYLSAAPLRSIPAAPTRLPLNRRWEPKRHSSSATAAAVLEQAAAQPETLSQDAIIESMDPAEAARISKVRNIGIAAHIDSGKTTSTERVLFYTGRIQAIHEVRGRDSVGAKMDSMDLEREKGITIQSAATFCDWVKKENGKDEKYHINLIDTPGHIDFTIEVERALRVLDGAVLILCAVSGVQSQTITVDRQMRRYNVPRISFINKMDRMGSNPFRAIEQINQKLKMHAAAVQVPIGLEDEFKGVVDIIRMKAIYNEGPRGEMVVEKDEIPADVRPVAEERRRMLIETLADVDDDIAELFLEEKEPTVEQLKAAIRRATIARTFTPVFMGSALADKAVQPMLDGICDYLPNPAEIENLALDQKRNEASVKLVPYNSLPFVGLAFKLEESNFGQLTYIRVYQGTLRKGTNVFNARNNKRIKVPRIVRMHSNEMEEVSEIGAGEICAVFGVDCASGDTFTDGQLNYSMSSMFVPEPVISLSIKPKNSKDLANFSKAINRFQREDPTFRVHFDTESEETIISGMGELHLDIYVERMRREYRVDCETGKPQVAYRETIGKRVEFDHLLKKQTGGPGEYARVAGWMEPTGNLDGNNFEEQITGGSISEKFLFACEKGFGLACDKGPLIGHKVLGTRMVINDGATHMTDSSEMSFKNATQQAFRKAFMDSQPHILEPLMKTVITAPSEFQGDVIALLNKRNAIINDTETGVDEFTVYADCSLNGMFGFSTHLRAATQGKGEYTMEFSHYEKAPGHLQKELIAEYEKAQAARHKK.

The transit peptide at 1–34 (MSVHTVMRTQVRSLAGMPKAAMRPLGNSFCARRY) directs the protein to the mitochondrion. Positions 99–385 (SKVRNIGIAA…GICDYLPNPA (287 aa)) constitute a tr-type G domain. GTP is bound by residues 108-115 (AHIDSGKT), 183-187 (DTPGH), and 237-240 (NKMD).

Belongs to the TRAFAC class translation factor GTPase superfamily. Classic translation factor GTPase family. EF-G/EF-2 subfamily.

Its subcellular location is the mitochondrion. It participates in protein biosynthesis; polypeptide chain elongation. Mitochondrial GTPase that catalyzes the GTP-dependent ribosomal translocation step during translation elongation. During this step, the ribosome changes from the pre-translocational (PRE) to the post-translocational (POST) state as the newly formed A-site-bound peptidyl-tRNA and P-site-bound deacylated tRNA move to the P and E sites, respectively. Catalyzes the coordinated movement of the two tRNA molecules, the mRNA and conformational changes in the ribosome. The sequence is that of Elongation factor G, mitochondrial from Coccidioides immitis (strain RS) (Valley fever fungus).